A 300-amino-acid chain; its full sequence is tRNA-cytidine(32) 2-sulfurtransferase (300 aa).

The PP-loop motif signature appears at 57–62; that stretch reads SGGKDS. Residues Cys-132, Cys-135, and Cys-223 each coordinate [4Fe-4S] cluster.

It belongs to the TtcA family. In terms of assembly, homodimer. Mg(2+) serves as cofactor. Requires [4Fe-4S] cluster as cofactor.

It localises to the cytoplasm. The catalysed reaction is cytidine(32) in tRNA + S-sulfanyl-L-cysteinyl-[cysteine desulfurase] + AH2 + ATP = 2-thiocytidine(32) in tRNA + L-cysteinyl-[cysteine desulfurase] + A + AMP + diphosphate + H(+). It participates in tRNA modification. Functionally, catalyzes the ATP-dependent 2-thiolation of cytidine in position 32 of tRNA, to form 2-thiocytidine (s(2)C32). The sulfur atoms are provided by the cysteine/cysteine desulfurase (IscS) system. In Xanthomonas campestris pv. campestris (strain 8004), this protein is tRNA-cytidine(32) 2-sulfurtransferase.